The sequence spans 149 residues: Calmodulin-1 (149 aa).

The residue at position 2 (A2) is an N-acetylalanine. 4 consecutive EF-hand domains span residues 8-43 (DQIA…LGQN), 44-79 (PTEA…KMKD), 81-116 (DSEE…LGEK), and 117-149 (LTDE…MMAK). The Ca(2+) site is built by D21, D23, D25, C27, E32, D57, D59, N61, T63, E68, D94, D96, N98, and E105. K116 bears the N6,N6,N6-trimethyllysine mark. Ca(2+) contacts are provided by D130, D132, D134, Q136, and E141.

It belongs to the calmodulin family.

Calmodulin mediates the control of a large number of enzymes, ion channels and other proteins by Ca(2+). Among the enzymes to be stimulated by the calmodulin-Ca(2+) complex are a number of protein kinases and phosphatases. The protein is Calmodulin-1 (CAM1-1) of Oryza sativa subsp. indica (Rice).